We begin with the raw amino-acid sequence, 122 residues long: Large ribosomal subunit protein uL14 (122 aa).

It belongs to the universal ribosomal protein uL14 family. As to quaternary structure, part of the 50S ribosomal subunit. Forms a cluster with proteins L3 and L19. In the 70S ribosome, L14 and L19 interact and together make contacts with the 16S rRNA in bridges B5 and B8.

Its function is as follows. Binds to 23S rRNA. Forms part of two intersubunit bridges in the 70S ribosome. The polypeptide is Large ribosomal subunit protein uL14 (Desulfosudis oleivorans (strain DSM 6200 / JCM 39069 / Hxd3) (Desulfococcus oleovorans)).